Reading from the N-terminus, the 950-residue chain is MQDTRATESDVPEHRYNAALAGRIERRWQQRWLERGTFHAPNPTGPLAGPTATLPADKLFVQDMFPYPSGAGLHVGHPLGYIATDVFARYHRMRGRNVLHALGYDAFGLPAEQYAVQTGAHPRDTTESNIATMQRQLDRLGLGHDRRRSFATTDPEYYRWTQWIFLQIYNAWYDLELNRARPISELEEQFASGARPAPDGKDWASMSQAERAAVIDSYRLVYQTDSMVNWCPGLGTVLSNEEVTAEGRSERGNFPVFRKRLWQWMMRITAYADRLVDDLDLLDWPENVKAMQRNWIGRSRGAQVRFDSPAGQIEVFTTRPDTLFGATYVVLAPEHDLVDALAAAQWPADTDPRWTGGAATPAEAVAQYRKSIAAKSDLERQENKEKTGVFLGVHAVNPVNGARVPIFIADYVLSGYGTGAIMAVPGHDQRDWEFATAFGLPIVEVISGGDITAAAHTGEGELVNSDYLNGLSVEEAKATVIGRLEADGHGTGTIQYKLRDWLFARQRYWGEPFPIVYDEDGAPHALPESMLPVRLPELDDFAPVTFDPDDADSEPSPPLAKATDWVHVELDLGDGPKKYRRDTNVMPNWAGSSWYQLRYADPTNADAFCAKENEQYWLGPRTAEHGPDDPGGVDLYVGGVEHAVLHLLYARFWQKVLFDLGYVSSSEPYRRLFNQGYIQAFAYTDPRGAYVPAAEVVERDGAFFWTDATGTEIEVSQEYGKIGKSLKNAISPDEVCDQFGADTFRFYEMSMGPLDTSRPWSTKDVVGAHRFLQRVWRLVVDEETGASRVTEDAPTDETLRFLHRTIAGVDEDFAALRDNTAGAKLIELTNHLTKSYPSGTPRAAVEPLVLMLAPLAPHVAEELWERLGHSESLAHGPFPVADPAWLVEETVEYPIQVNGKVRSRIQVPADADNAAIEAAALADEKIAALLAGATPRKLIVVPGRLVNIVA.

A 'HIGH' region motif is present at residues 66–77 (PYPSGAGLHVGH). The 'KMSKS' region motif lies at 721–725 (KIGKS). Lysine 724 is an ATP binding site.

Belongs to the class-I aminoacyl-tRNA synthetase family.

Its subcellular location is the cytoplasm. It carries out the reaction tRNA(Leu) + L-leucine + ATP = L-leucyl-tRNA(Leu) + AMP + diphosphate. This chain is Leucine--tRNA ligase, found in Nocardia farcinica (strain IFM 10152).